Reading from the N-terminus, the 198-residue chain is Recombination protein RecR (198 aa).

The C4-type zinc finger occupies 57–72 (CSVCGHITDQDPCYIC). Residues 80-175 (SVICVVQDPK…KLSRIAHGLP (96 aa)) form the Toprim domain.

The protein belongs to the RecR family.

In terms of biological role, may play a role in DNA repair. It seems to be involved in an RecBC-independent recombinational process of DNA repair. It may act with RecF and RecO. This Bacillus subtilis (strain 168) protein is Recombination protein RecR.